Here is a 251-residue protein sequence, read N- to C-terminus: Guanine nucleotide-binding protein subunit gamma 3 (251 aa).

Positions 1–10 are enriched in gly residues; the sequence is MSAPSGGGEG. The tract at residues 1 to 44 is disordered; it reads MSAPSGGGEGGGKESAAGGVSSSSLAPSSLPPPRPKSPPEYPDL. The span at 14 to 28 shows a compositional bias: low complexity; that stretch reads ESAAGGVSSSSLAPS. The span at 29 to 41 shows a compositional bias: pro residues; the sequence is SLPPPRPKSPPEY. A G protein gamma domain is found at 46–126; it reads GKRREAARVQ…LSLVSFCCCC (81 aa). Position 248 is a cysteine methyl ester (cysteine 248). Cysteine 248 carries the S-farnesyl cysteine lipid modification. Residues 249 to 251 constitute a propeptide, removed in mature form; the sequence is LAF.

In terms of assembly, g proteins are composed of 3 units, alpha, beta and gamma. As to expression, expressed in flowers and siliques.

Guanine nucleotide-binding proteins (G proteins) are involved as a modulator or transducer in various transmembrane signaling systems. The beta and gamma chains are required for the GTPase activity, for replacement of GDP by GTP, and for G protein-effector interaction. The sequence is that of Guanine nucleotide-binding protein subunit gamma 3 (GG3) from Arabidopsis thaliana (Mouse-ear cress).